The following is a 440-amino-acid chain: MSDVSFHDLSSLDATQRSSLLKRAEADLSVFVEKVRPIIQAVKDEGDAALIRFARELDKANVAEGGLQVSEAEFDAAFDKVEKDVVESIGFGIDNIRRFHEEQKPETMWLKEVRPGAYAGDRYTPIASVALYVPRGKGAFPSVTMMTSVPAVIAGVPQIAIVTPPTSDGSVDAATLVAARLAGVHTVYKCGGAQAVAAVAYGTETVKPALKIVGPGSPWVVAAKSELSSIINTGLPAGPSEAIIFADDSVDGGLAALDLLIEAEHGPDSSAYLVTHSRKVAEAALAALPQHWSRMTEQRVEFSRAVLTGKRGGIVLTASLEDSYRFINDYAPEHLEILSKEPFAHLGHITEAAEILMGPHTPVTLANFVLGPNAVLPTSRWARTYGPLSVTDFVKRSSVGYVTSAAYPELAKHARRLARYEGFSSHENAVSEIRDRYLAG.

Zn(2+) is bound at residue His-265. Catalysis depends on proton acceptor residues Glu-333 and His-334. Residue His-426 participates in Zn(2+) binding.

This sequence belongs to the histidinol dehydrogenase family. Requires Zn(2+) as cofactor.

The chain is Histidinol dehydrogenase homolog 2 from Mesorhizobium japonicum (strain LMG 29417 / CECT 9101 / MAFF 303099) (Mesorhizobium loti (strain MAFF 303099)).